Reading from the N-terminus, the 184-residue chain is ATP synthase subunit b, chloroplastic (184 aa).

A helical membrane pass occupies residues 31–53 (LINLSVVLGVLIYFGKGVLSNLL).

It belongs to the ATPase B chain family. F-type ATPases have 2 components, F(1) - the catalytic core - and F(0) - the membrane proton channel. F(1) has five subunits: alpha(3), beta(3), gamma(1), delta(1), epsilon(1). F(0) has four main subunits: a(1), b(1), b'(1) and c(10-14). The alpha and beta chains form an alternating ring which encloses part of the gamma chain. F(1) is attached to F(0) by a central stalk formed by the gamma and epsilon chains, while a peripheral stalk is formed by the delta, b and b' chains.

The protein localises to the plastid. It localises to the chloroplast thylakoid membrane. F(1)F(0) ATP synthase produces ATP from ADP in the presence of a proton or sodium gradient. F-type ATPases consist of two structural domains, F(1) containing the extramembraneous catalytic core and F(0) containing the membrane proton channel, linked together by a central stalk and a peripheral stalk. During catalysis, ATP synthesis in the catalytic domain of F(1) is coupled via a rotary mechanism of the central stalk subunits to proton translocation. In terms of biological role, component of the F(0) channel, it forms part of the peripheral stalk, linking F(1) to F(0). This is ATP synthase subunit b, chloroplastic from Cycas taitungensis (Prince sago).